Here is a 343-residue protein sequence, read N- to C-terminus: Cyclic AMP-AMP-AMP synthase (343 aa).

It belongs to the CD-NTase family. D01 subfamily. It depends on Mg(2+) as a cofactor.

The catalysed reaction is 3 ATP = 2',3',3'-c-tri-AMP + 3 diphosphate. Functionally, cyclic nucleotide synthase (second messenger synthase) of a CBASS antivirus system. CBASS (cyclic oligonucleotide-based antiphage signaling system) provides immunity against bacteriophage. The CD-NTase protein synthesizes cyclic nucleotides in response to infection; these serve as specific second messenger signals. The signals activate a diverse range of effectors, leading to bacterial cell death and thus abortive phage infection. A type II-C(AAAA) CBASS system. In terms of biological role, cyclic trinucleotide synthase that catalyzes the synthesis of 2',3',3'-cyclic AMP-AMP-AMP (2',3',3'-c-tri-AMP or 2'3'3'-cAAA) as the major product, as well as another cyclic AMP(4) 2'-5'-linked minor product that acts as a second messenger for cell signal transduction. This Acinetobacter sp. (strain ATCC 27244 / 9458) protein is Cyclic AMP-AMP-AMP synthase.